Consider the following 153-residue polypeptide: Large ribosomal subunit protein uL22 (153 aa).

Positions 110–153 (ITVIVESRPPKQKGASAASARSRRAQGSKAAATKKSAETKEGSE) are disordered. The segment covering 144–153 (KSAETKEGSE) has biased composition (basic and acidic residues).

The protein belongs to the universal ribosomal protein uL22 family. In terms of assembly, part of the 50S ribosomal subunit.

Functionally, this protein binds specifically to 23S rRNA; its binding is stimulated by other ribosomal proteins, e.g. L4, L17, and L20. It is important during the early stages of 50S assembly. It makes multiple contacts with different domains of the 23S rRNA in the assembled 50S subunit and ribosome. Its function is as follows. The globular domain of the protein is located near the polypeptide exit tunnel on the outside of the subunit, while an extended beta-hairpin is found that lines the wall of the exit tunnel in the center of the 70S ribosome. The polypeptide is Large ribosomal subunit protein uL22 (Mycolicibacterium smegmatis (strain ATCC 700084 / mc(2)155) (Mycobacterium smegmatis)).